The sequence spans 128 residues: Profilin (128 aa).

It belongs to the profilin family.

Functionally, more likely to influence phosphoinositide metabolism than actin assembly. The sequence is that of Profilin from Homo sapiens (Human).